Reading from the N-terminus, the 295-residue chain is Tyrosine recombinase XerC (295 aa).

Residues 1 to 85 (MHILLQKYYN…ALRQFLNYLV (85 aa)) enclose the Core-binding (CB) domain. The 180-residue stretch at 106–285 (YLPKNMDMEQ…DFQHLAQVYD (180 aa)) folds into the Tyr recombinase domain. Residues arginine 145, lysine 169, histidine 237, arginine 240, and histidine 263 contribute to the active site. Tyrosine 272 acts as the O-(3'-phospho-DNA)-tyrosine intermediate in catalysis.

Belongs to the 'phage' integrase family. XerC subfamily. In terms of assembly, forms a cyclic heterotetrameric complex composed of two molecules of XerC and two molecules of XerD.

The protein resides in the cytoplasm. Its function is as follows. Site-specific tyrosine recombinase, which acts by catalyzing the cutting and rejoining of the recombining DNA molecules. The XerC-XerD complex is essential to convert dimers of the bacterial chromosome into monomers to permit their segregation at cell division. It also contributes to the segregational stability of plasmids. In Histophilus somni (strain 2336) (Haemophilus somnus), this protein is Tyrosine recombinase XerC.